A 309-amino-acid chain; its full sequence is Jacalin-related lectin 25 (309 aa).

A Jacalin-type lectin domain is found at 8 to 190; that stretch reads MFKVGPIGSQ…LTSIGIYVCP (183 aa).

This sequence belongs to the jacalin lectin family.

This chain is Jacalin-related lectin 25 (JAL25), found in Arabidopsis thaliana (Mouse-ear cress).